A 171-amino-acid chain; its full sequence is Co-chaperone protein HscB homolog (171 aa).

The 73-residue stretch at 3–75 (SHFALFDLEP…SQRARYLLSL (73 aa)) folds into the J domain.

Belongs to the HscB family. As to quaternary structure, interacts with HscA and stimulates its ATPase activity.

In terms of biological role, co-chaperone involved in the maturation of iron-sulfur cluster-containing proteins. Seems to help targeting proteins to be folded toward HscA. The sequence is that of Co-chaperone protein HscB homolog from Azotobacter vinelandii.